Here is a 439-residue protein sequence, read N- to C-terminus: Cell division protein FtsA (439 aa).

Belongs to the FtsA/MreB family. In terms of assembly, self-interacts. Interacts with FtsZ.

The protein resides in the cell inner membrane. Its function is as follows. Cell division protein that is involved in the assembly of the Z ring. May serve as a membrane anchor for the Z ring. The polypeptide is Cell division protein FtsA (Shigella flexneri).